Here is a 241-residue protein sequence, read N- to C-terminus: 4-hydroxy-tetrahydrodipicolinate reductase (241 aa).

NAD(+) is bound by residues 7–12, 74–76, and 98–101; these read GVNGHM, GTT, and STNM. Catalysis depends on histidine 131, which acts as the Proton donor/acceptor. Histidine 132 contributes to the (S)-2,3,4,5-tetrahydrodipicolinate binding site. Lysine 135 acts as the Proton donor in catalysis. 141–142 is a (S)-2,3,4,5-tetrahydrodipicolinate binding site; the sequence is GS.

This sequence belongs to the DapB family.

It is found in the cytoplasm. The catalysed reaction is (S)-2,3,4,5-tetrahydrodipicolinate + NAD(+) + H2O = (2S,4S)-4-hydroxy-2,3,4,5-tetrahydrodipicolinate + NADH + H(+). It carries out the reaction (S)-2,3,4,5-tetrahydrodipicolinate + NADP(+) + H2O = (2S,4S)-4-hydroxy-2,3,4,5-tetrahydrodipicolinate + NADPH + H(+). It functions in the pathway amino-acid biosynthesis; L-lysine biosynthesis via DAP pathway; (S)-tetrahydrodipicolinate from L-aspartate: step 4/4. Catalyzes the conversion of 4-hydroxy-tetrahydrodipicolinate (HTPA) to tetrahydrodipicolinate. This is 4-hydroxy-tetrahydrodipicolinate reductase from Alkaliphilus oremlandii (strain OhILAs) (Clostridium oremlandii (strain OhILAs)).